We begin with the raw amino-acid sequence, 56 residues long: Large ribosomal subunit protein bL33A (56 aa).

It belongs to the bacterial ribosomal protein bL33 family.

The chain is Large ribosomal subunit protein bL33A from Sorangium cellulosum (strain So ce56) (Polyangium cellulosum (strain So ce56)).